The chain runs to 373 residues: 4-hydroxy-3-methylbut-2-en-1-yl diphosphate synthase (flavodoxin) (373 aa).

The [4Fe-4S] cluster site is built by cysteine 268, cysteine 271, cysteine 303, and glutamate 310.

Belongs to the IspG family. It depends on [4Fe-4S] cluster as a cofactor.

It catalyses the reaction (2E)-4-hydroxy-3-methylbut-2-enyl diphosphate + oxidized [flavodoxin] + H2O + 2 H(+) = 2-C-methyl-D-erythritol 2,4-cyclic diphosphate + reduced [flavodoxin]. Its pathway is isoprenoid biosynthesis; isopentenyl diphosphate biosynthesis via DXP pathway; isopentenyl diphosphate from 1-deoxy-D-xylulose 5-phosphate: step 5/6. In terms of biological role, converts 2C-methyl-D-erythritol 2,4-cyclodiphosphate (ME-2,4cPP) into 1-hydroxy-2-methyl-2-(E)-butenyl 4-diphosphate. The protein is 4-hydroxy-3-methylbut-2-en-1-yl diphosphate synthase (flavodoxin) of Exiguobacterium sp. (strain ATCC BAA-1283 / AT1b).